Here is a 347-residue protein sequence, read N- to C-terminus: NADH-ubiquinone oxidoreductase chain 2 (347 aa).

A run of 10 helical transmembrane segments spans residues 13–33, 55–75, 96–116, 122–142, 151–171, 178–198, 199–219, 237–257, 274–294, and 326–346; these read IFTGTLITALSSHWFFAWLGL, AAIKYFLTQATASMILLMAIL, LMIVTALAMKLGMAPFHFWVP, VPLTSGLLLLTWQKLAPISIM, TNILLTLSILSILVGGWGGLN, ILAYSSITHMGWMMAVLPYNP, DITILNLIIYIILTTTAFLIL, LTWLMPLIPSTLLSLGGLPPL, GNLITPTIMAIITLLNLYFYV, and LPTLTILTTLLLPISPLILSI.

Belongs to the complex I subunit 2 family. Core subunit of respiratory chain NADH dehydrogenase (Complex I) which is composed of 45 different subunits. Interacts with TMEM242.

It is found in the mitochondrion inner membrane. It catalyses the reaction a ubiquinone + NADH + 5 H(+)(in) = a ubiquinol + NAD(+) + 4 H(+)(out). Its function is as follows. Core subunit of the mitochondrial membrane respiratory chain NADH dehydrogenase (Complex I) which catalyzes electron transfer from NADH through the respiratory chain, using ubiquinone as an electron acceptor. Essential for the catalytic activity and assembly of complex I. This chain is NADH-ubiquinone oxidoreductase chain 2, found in Pongo abelii (Sumatran orangutan).